The following is a 317-amino-acid chain: UAP56-interacting factor (317 aa).

Methionine 1 bears the N-acetylmethionine mark. A disordered region spans residues 1-23 (MNRFGTRLVGATATTPPAPKARS). Residue threonine 14 is modified to Phosphothreonine. Residue serine 23 is modified to Phosphoserine. The UAP56-binding motif signature appears at 26–44 (NLDKIDMSLDEIIKLNRKE). Serine 60 and serine 117 each carry phosphoserine. Residue lysine 139 forms a Glycyl lysine isopeptide (Lys-Gly) (interchain with G-Cter in SUMO1) linkage. A Glycyl lysine isopeptide (Lys-Gly) (interchain with G-Cter in SUMO2) cross-link involves residue lysine 260.

It belongs to the UIF family. Interacts with DDX39B/UAP56 and NXF1; interaction with DDX39B/UAP56 and NXF1 are mutually exclusive. Interacts with SSRP1; required for its recruitment to mRNAs. Interacts with CHTOP.

The protein resides in the nucleus. It localises to the nucleoplasm. The protein localises to the nucleus speckle. Its function is as follows. Required for mRNA export from the nucleus to the cytoplasm. Acts as an adapter that uses the DDX39B/UAP56-NFX1 pathway to ensure efficient mRNA export and delivering to the nuclear pore. Associates with spliced and unspliced mRNAs simultaneously with ALYREF/THOC4. The chain is UAP56-interacting factor (Fyttd1) from Rattus norvegicus (Rat).